The primary structure comprises 134 residues: Large ribosomal subunit protein uL16c (134 aa).

The segment at 1–22 (MLSPKRTRFRKQHRGRMKGISH) is disordered.

This sequence belongs to the universal ribosomal protein uL16 family. In terms of assembly, part of the 50S ribosomal subunit.

The protein localises to the plastid. The protein resides in the chloroplast. The chain is Large ribosomal subunit protein uL16c from Nicotiana tabacum (Common tobacco).